We begin with the raw amino-acid sequence, 60 residues long: Temporin-MT5 (60 aa).

Positions 1 to 22 are cleaved as a signal peptide; the sequence is MFTLKKPLLLLFFLATINLSLC. The propeptide at 23–44 is removed in mature form; that stretch reads EQERNAEEERRDEPDERNAEVE. Residue Phe58 is modified to Phenylalanine amide.

This sequence belongs to the frog skin active peptide (FSAP) family. Temporin subfamily. Expressed by the skin glands.

The protein localises to the secreted. Antimicrobial peptide. In Amolops mantzorum (Sichuan torrent frog), this protein is Temporin-MT5.